Here is a 142-residue protein sequence, read N- to C-terminus: Probable histone H2AXb (142 aa).

A compositionally biased stretch (gly residues) spans 1 to 12 (MSSGAGSGTTKG). Residues 1 to 28 (MSSGAGSGTTKGGRGKPKATKSVSRSSK) form a disordered region. Position 139 is a phosphoserine; by ATM and ATR (Ser-139). Positions 139–140 (SQ) match the [ST]-Q motif motif.

The protein belongs to the histone H2A family. The nucleosome is a histone octamer containing two molecules each of H2A, H2B, H3 and H4 assembled in one H3-H4 heterotetramer and two H2A-H2B heterodimers. The octamer wraps approximately 147 bp of DNA. Interacts with numerous proteins required for DNA damage signaling and repair when phosphorylated on Ser-139. Phosphorylated to form H2AXS139ph (gamma-H2AX) in response to DNA double strand breaks (DSBs) generated by exogenous genotoxic agents and by stalled replication forks, and may also occur during meiotic recombination events. Phosphorylation can extend up to several thousand nucleosomes from the actual site of the DSB and may mark the surrounding chromatin for recruitment of proteins required for DNA damage signaling and repair. Widespread phosphorylation may also serve to amplify the damage signal or aid repair of persistent lesions. H2AXS139ph in response to ionizing radiation is mediated by ATM while defects in DNA replication induce H2AXS139ph subsequent to activation of ATR. Dephosphorylation of H2AXS139ph by PP2A is required for DNA DSB repair. Expressed in meristems and dividing cells.

It localises to the nucleus. Its subcellular location is the chromosome. Its function is as follows. Variant histone H2A which replaces conventional H2A in a subset of nucleosomes. Nucleosomes wrap and compact DNA into chromatin, limiting DNA accessibility to the cellular machineries which require DNA as a template. Histones thereby play a central role in transcription regulation, DNA repair, DNA replication and chromosomal stability. DNA accessibility is regulated via a complex set of post-translational modifications of histones, also called histone code, and nucleosome remodeling. Required for checkpoint-mediated arrest of cell cycle progression in response to low doses of ionizing radiation and for efficient repair of DNA double strand breaks (DSBs) specifically when modified by C-terminal phosphorylation. The chain is Probable histone H2AXb from Arabidopsis thaliana (Mouse-ear cress).